A 1121-amino-acid chain; its full sequence is MSYNNGGGGGGGGYRNDRDDRYHNNDRQNYRSSDQGRSGYNDDRRDNRYDDRRGSNNDRGCYDQHDRRGSSNDDRRGYRGYNQGGGGYQQQYSQDARYGSNQRNDNYGNNRGSHGGANMYSQNGGNRGGGGGRVGGGRTAAGMSNPGDLVGGADQPIHSVSKKSLRHNAQEFAVRPKTMVQDKGLGQKTTLLTNHTLVQLPQEPITLHVFNIEVFINGKSSNKRELCGPRFWEILKENKPTFGMPNQYIFNDVNMMWSTNKLRQSEGRTNNRRMNFVWKYVKQIKFGGNIEDEETMQLLSTLIDAIATQRARLPLAPPKYTVFKRLTYLICEEAYEPELPDVSLCHKLRIGTDARVGVSIAIRTNLRAGITACFDLGHTLFTRPAYPLVRLLCDIIEHSVVLDEAFEMKYDAALRACNVSDENLRVMTQILTKMTLQLSTETGDYVGEDGEVIVRPAPTIRNPGRNFKFVGLGAPADRYYFTSDGVELTVADYYLQKYNIRLRYPNLPCVLKKAPEQCGNKHSAMPLELVSYIVVPTRYGGFTMPDMRADMINKTTYTAQQRGKLLQHIIAQKSLSGIEPPVSNNDDYMKKHKLVMKREPIRVKATILPPPTLVYGDSVFHDEHHIGEWEAVTHDPPRQVLDGAVFRRKLYKSSEQPLMKRLMGSILLIQSPRQCRDFDYNQQGYHAIMRAIEDSGQPVLWADENKHSAVIQGELQFNQNQHGIEVIEQFLQNIKSTIGEYERDGEVIVPIVFAVFQARATVYSGNNNEYNDYNVLKYLADNKYGIHTQGILEKSLGVVGPSPKNCALTRLMVEKVLGKVGTTHRKLERGGAHKTWTIFTDPAKPTLVLGIDVSHPSTRDRETGNVLQKMSAATVVGNIDLDVTEFRASSRIQDTGVECLIDFSKEIDERIGEFIDHTGKRPAHIVVYRDGLSEGDFQKYLFEERVCIEERCLKIDTSFQPSITYIVVTKRHHTQFFLEDPSQGYESQGYNVLPGTLIEDAVTTNKYYDFFLSTQIGNEGCFRPTHYYVLHDTWTGKPDSFWPTVTHALTYNFCRSTTTVALPAPVLYAHLAAKRAKETLDGINTYKSVNNIYCDLESFGDLCEVNKDMNVNEKLEGMTFV.

A compositionally biased stretch (gly residues) spans 1-14 (MSYNNGGGGGGGGY). Positions 1–134 (MSYNNGGGGG…GNRGGGGGRV (134 aa)) are disordered. 2 stretches are compositionally biased toward basic and acidic residues: residues 15–29 (RNDR…DRQN) and 40–77 (YNDD…DRRG). Positions 99-112 (GSNQRNDNYGNNRG) are enriched in polar residues. Over residues 125–134 (GNRGGGGGRV) the composition is skewed to gly residues. The region spanning 426 to 534 (VMTQILTKMT…MPLELVSYIV (109 aa)) is the PAZ domain. The 308-residue stretch at 774–1081 (NVLKYLADNK…AAKRAKETLD (308 aa)) folds into the Piwi domain.

It belongs to the argonaute family. Piwi subfamily. In terms of assembly, interacts with rde-12. Interacts with rde-10. As to expression, highly expressed in the germline in hermaphrodites.

It is found in the cytoplasm. In terms of biological role, argonaute protein required for gene silencing in the endogenous RNA interference (RNAi) pathway. Involved in the 26G RNAi pathway and associates with both unmethylated and methylated 26G small interfering RNAs (26G-siRNAs), which are a class of 26 nucleotide siRNAs that possess a guanine residue at the 5'-end. Associated 26G-siRNAs are methylated by the methyltransferase henn-1, which stabilizes the siRNAs. Association with 26G-siRNAs is required for the biogenesis of secondary 22G-siRNAs (a class of 22 nucleotide siRNAs that possess a triphosphorylated guanine residue at the 5'-end). May be involved in passenger strand cleavage of target 26G-siRNAs. The sequence is that of Piwi-like protein ergo-1 from Caenorhabditis elegans.